The sequence spans 292 residues: Elongation factor Ts (292 aa).

Positions 80 to 83 (TDFV) are involved in Mg(2+) ion dislocation from EF-Tu.

This sequence belongs to the EF-Ts family.

The protein resides in the cytoplasm. Functionally, associates with the EF-Tu.GDP complex and induces the exchange of GDP to GTP. It remains bound to the aminoacyl-tRNA.EF-Tu.GTP complex up to the GTP hydrolysis stage on the ribosome. This Tolumonas auensis (strain DSM 9187 / NBRC 110442 / TA 4) protein is Elongation factor Ts.